We begin with the raw amino-acid sequence, 191 residues long: Molybdenum cofactor guanylyltransferase (191 aa).

Residues 11–13 (LCG), K23, D66, and D97 contribute to the GTP site. D97 is a Mg(2+) binding site.

This sequence belongs to the MobA family. Monomer. Mg(2+) serves as cofactor.

It localises to the cytoplasm. The enzyme catalyses Mo-molybdopterin + GTP + H(+) = Mo-molybdopterin guanine dinucleotide + diphosphate. In terms of biological role, transfers a GMP moiety from GTP to Mo-molybdopterin (Mo-MPT) cofactor (Moco or molybdenum cofactor) to form Mo-molybdopterin guanine dinucleotide (Mo-MGD) cofactor. The protein is Molybdenum cofactor guanylyltransferase of Campylobacter jejuni subsp. doylei (strain ATCC BAA-1458 / RM4099 / 269.97).